Consider the following 188-residue polypeptide: CASP-like protein 4B1 (188 aa).

The span at 1–11 shows a compositional bias: basic and acidic residues; the sequence is MTNPDKQKPVE. The disordered stretch occupies residues 1–34; sequence MTNPDKQKPVEVTDVETAAEKTSEPTPASGTSTI. The Cytoplasmic segment spans residues 1-46; it reads MTNPDKQKPVEVTDVETAAEKTSEPTPASGTSTITQRWKREDLIKK. Positions 24-34 are enriched in polar residues; the sequence is EPTPASGTSTI. A helical membrane pass occupies residues 47-67; it reads ASPITRGICLLFSLLAFLIMV. The Extracellular portion of the chain corresponds to 68 to 84; that stretch reads SNKHGYGRNFNEYEEYR. The chain crosses the membrane as a helical span at residues 85-105; that stretch reads YVLAISIISTLYTAWQTFAHF. Over 106–120 the chain is Cytoplasmic; sequence SKREFFDRRTSTLVD. Residues 121–141 form a helical membrane-spanning segment; it reads FSGDQIVAYLLISAASSAIPL. Residues 142–156 are Extracellular-facing; it reads TNRFREGQDNIFTDS. Residues 157–177 form a helical membrane-spanning segment; it reads AASAISMAIFAFVALALSALF. Residues 178-188 are Cytoplasmic-facing; that stretch reads SGYKLSTHSFI.

This sequence belongs to the Casparian strip membrane proteins (CASP) family. As to quaternary structure, homodimer and heterodimers.

It is found in the cell membrane. The sequence is that of CASP-like protein 4B1 from Arabidopsis lyrata subsp. lyrata (Lyre-leaved rock-cress).